We begin with the raw amino-acid sequence, 132 residues long: Cliotide T2 (132 aa).

The N-terminal stretch at Met1–Gly28 is a signal peptide. Residues Gly29–Asn58 constitute a cross-link (cyclopeptide (Gly-Asn)). 3 cysteine pairs are disulfide-bonded: Cys34–Cys48, Cys38–Cys50, and Cys43–Cys55. Residues His59–Asn132 constitute a propeptide, removed in mature form.

Post-translationally, this is a cyclic peptide. In terms of tissue distribution, expressed in flower, stem, shoot and pod but not in root, leaf, seed and nodule (at protein level).

In terms of biological role, probably participates in a plant defense mechanism. Not active against Gram-negative bacteria E.coli ATCC 700926, K.pneumoniae ATTC 13883 and P.aeruginosa ATCC 39018 at concentration up to 100 uM. Has cytotoxic but no hemolytic activity. The sequence is that of Cliotide T2 from Clitoria ternatea (Butterfly pea).